The primary structure comprises 111 residues: Putative single-stranded DNA-binding protein ycf41 (111 aa).

One can recognise an SSB domain in the interval 1–98; it reads MNKCNLLVQI…FSTSRIFKYK (98 aa).

Its subcellular location is the plastid. The protein localises to the chloroplast. The sequence is that of Putative single-stranded DNA-binding protein ycf41 (ycf41) from Porphyra purpurea (Red seaweed).